The sequence spans 482 residues: uncharacterized protein (482 aa).

One can recognise a DWNN domain in the interval 5–79; that stretch reads IYYKFKSQKD…STSVIVRRVP (75 aa). The tract at residues 86–108 is disordered; it reads GTAARYVSGAPKTTGARSDSVKR. The CCHC-type zinc-finger motif lies at 183–200; it reads YICYRCGQKGHWIQACPT. Residues 282–322 form an RING-type; degenerate zinc finger; sequence CTLCKKLARNACRTPCCDKLFCEECIQTALLDSDFECPNCH. Disordered stretches follow at residues 346–393 and 447–482; these read KSVL…SSAV and QVYHNNRNPPRTNSRPSNASVPPPSSLHKNPPTKTN. A compositionally biased stretch (low complexity) spans 451–466; the sequence is NNRNPPRTNSRPSNAS.

The protein localises to the nucleus. This is an uncharacterized protein from Schizosaccharomyces pombe (strain 972 / ATCC 24843) (Fission yeast).